The primary structure comprises 413 residues: Elongation factor 1-alpha (413 aa).

GTP-binding positions include 1 to 7 (HVDSGKS), 77 to 81 (DAPGH), and 139 to 142 (NKMD). A tr-type G domain is found at 1–228 (HVDSGKSTTT…DAILPPARPT (228 aa)). 5-glutamyl glycerylphosphorylethanolamine occurs at positions 287 and 360.

Belongs to the TRAFAC class translation factor GTPase superfamily. Classic translation factor GTPase family. EF-Tu/EF-1A subfamily.

Its subcellular location is the cytoplasm. This protein promotes the GTP-dependent binding of aminoacyl-tRNA to the A-site of ribosomes during protein biosynthesis. This chain is Elongation factor 1-alpha, found in Heliocheilus albipunctella (Millet head miner).